A 69-amino-acid polypeptide reads, in one-letter code: Large ribosomal subunit protein uL29 (69 aa).

It belongs to the universal ribosomal protein uL29 family.

The protein is Large ribosomal subunit protein uL29 of Mycoplasmopsis agalactiae (strain NCTC 10123 / CIP 59.7 / PG2) (Mycoplasma agalactiae).